Reading from the N-terminus, the 263-residue chain is 3-methyl-2-oxobutanoate hydroxymethyltransferase (263 aa).

2 residues coordinate Mg(2+): Asp46 and Asp85. 3-methyl-2-oxobutanoate contacts are provided by residues 46 to 47 (DS), Asp85, and Lys115. Glu117 lines the Mg(2+) pocket. Glu180 (proton acceptor) is an active-site residue.

This sequence belongs to the PanB family. In terms of assembly, homodecamer; pentamer of dimers. The cofactor is Mg(2+).

Its subcellular location is the cytoplasm. It catalyses the reaction 3-methyl-2-oxobutanoate + (6R)-5,10-methylene-5,6,7,8-tetrahydrofolate + H2O = 2-dehydropantoate + (6S)-5,6,7,8-tetrahydrofolate. It participates in cofactor biosynthesis; (R)-pantothenate biosynthesis; (R)-pantoate from 3-methyl-2-oxobutanoate: step 1/2. Functionally, catalyzes the reversible reaction in which hydroxymethyl group from 5,10-methylenetetrahydrofolate is transferred onto alpha-ketoisovalerate to form ketopantoate. This is 3-methyl-2-oxobutanoate hydroxymethyltransferase from Corynebacterium diphtheriae (strain ATCC 700971 / NCTC 13129 / Biotype gravis).